The sequence spans 213 residues: Pyridoxine/pyridoxamine 5'-phosphate oxidase (213 aa).

Residues 9–12 (RKSY) and Lys-67 each bind substrate. FMN is bound by residues 62 to 67 (RVVLIK), 77 to 78 (YT), Arg-83, and Lys-84. Tyr-124, Arg-128, and Ser-132 together coordinate substrate. Residues 141–142 (QS) and Trp-185 contribute to the FMN site. 191–193 (RLH) contributes to the substrate binding site. Arg-195 serves as a coordination point for FMN.

The protein belongs to the pyridoxamine 5'-phosphate oxidase family. Homodimer. FMN is required as a cofactor.

It catalyses the reaction pyridoxamine 5'-phosphate + O2 + H2O = pyridoxal 5'-phosphate + H2O2 + NH4(+). It carries out the reaction pyridoxine 5'-phosphate + O2 = pyridoxal 5'-phosphate + H2O2. It participates in cofactor metabolism; pyridoxal 5'-phosphate salvage; pyridoxal 5'-phosphate from pyridoxamine 5'-phosphate: step 1/1. It functions in the pathway cofactor metabolism; pyridoxal 5'-phosphate salvage; pyridoxal 5'-phosphate from pyridoxine 5'-phosphate: step 1/1. In terms of biological role, catalyzes the oxidation of either pyridoxine 5'-phosphate (PNP) or pyridoxamine 5'-phosphate (PMP) into pyridoxal 5'-phosphate (PLP). This is Pyridoxine/pyridoxamine 5'-phosphate oxidase from Methylibium petroleiphilum (strain ATCC BAA-1232 / LMG 22953 / PM1).